Here is a 416-residue protein sequence, read N- to C-terminus: Acyl-coenzyme A amino acid N-acyltransferase 1 (416 aa).

The residue at position 125 (S125) is a Phosphoserine. Catalysis depends on charge relay system residues S235, D325, and H359. A Phosphoserine modification is found at S414. The short motif at S414–L416 is the Microbody targeting signal element.

It belongs to the C/M/P thioester hydrolase family. Expressed mainly in liver and kidney with low levels in adrenal and little or no expression in other tissues.

It localises to the peroxisome. It carries out the reaction tetracosanoyl-CoA + taurine = N-tetracosanoyl-taurine + CoA + H(+). The enzyme catalyses eicosanoyl-CoA + taurine = N-eicosanoyl-taurine + CoA + H(+). It catalyses the reaction taurine + octadecanoyl-CoA = N-octadecanoyl-taurine + CoA + H(+). The catalysed reaction is taurine + hexadecanoyl-CoA = N-hexadecanoyl-taurine + CoA + H(+). It carries out the reaction tetradecanoyl-CoA + taurine = N-tetradecanoyl-taurine + CoA + H(+). The enzyme catalyses dodecanoyl-CoA + taurine = N-dodecanoyl-taurine + CoA + H(+). Functionally, acyltransferase which efficiently conjugates very long-chain and long-chain fatty acids to taurine. Shows no conjugation activity in the presence of glycine. In Mus musculus (Mouse), this protein is Acyl-coenzyme A amino acid N-acyltransferase 1.